Reading from the N-terminus, the 92-residue chain is Signal recognition particle 19 kDa protein (92 aa).

Belongs to the SRP19 family. In terms of assembly, part of the signal recognition particle protein translocation system, which is composed of SRP and FtsY. Archaeal SRP consists of a 7S RNA molecule of 300 nucleotides and two protein subunits: SRP54 and SRP19.

The protein resides in the cytoplasm. Functionally, involved in targeting and insertion of nascent membrane proteins into the cytoplasmic membrane. Binds directly to 7S RNA and mediates binding of the 54 kDa subunit of the SRP. The protein is Signal recognition particle 19 kDa protein of Haloferax volcanii (strain ATCC 29605 / DSM 3757 / JCM 8879 / NBRC 14742 / NCIMB 2012 / VKM B-1768 / DS2) (Halobacterium volcanii).